The chain runs to 261 residues: Probable membrane transporter protein PD_1894 (261 aa).

8 helical membrane passes run 6-26, 45-64, 78-98, 99-119, 150-170, 175-195, 205-225, and 239-259; these read LIVT…LGGG, HIAI…ANLI, VIFA…GMLI, DGQR…LLML, AASG…LIFA, TINA…ITTL, WTIA…GTLL, and VFGL…WASL.

It belongs to the 4-toluene sulfonate uptake permease (TSUP) (TC 2.A.102) family.

Its subcellular location is the cell membrane. The chain is Probable membrane transporter protein PD_1894 from Xylella fastidiosa (strain Temecula1 / ATCC 700964).